We begin with the raw amino-acid sequence, 397 residues long: 1-deoxy-D-xylulose 5-phosphate reductoisomerase (397 aa).

NADPH is bound by residues Thr-10, Gly-11, Ser-12, Ile-13, Gln-38, and Asn-123. Lys-124 contributes to the 1-deoxy-D-xylulose 5-phosphate binding site. Glu-125 is an NADPH binding site. Asp-149 provides a ligand contact to Mn(2+). 1-deoxy-D-xylulose 5-phosphate-binding residues include Ser-150, Glu-151, Ser-185, and His-208. Glu-151 is a binding site for Mn(2+). Gly-214 is an NADPH binding site. 4 residues coordinate 1-deoxy-D-xylulose 5-phosphate: Ser-221, Asn-226, Lys-227, and Glu-230. Glu-230 contacts Mn(2+).

This sequence belongs to the DXR family. Requires Mg(2+) as cofactor. Mn(2+) is required as a cofactor.

The enzyme catalyses 2-C-methyl-D-erythritol 4-phosphate + NADP(+) = 1-deoxy-D-xylulose 5-phosphate + NADPH + H(+). Its pathway is isoprenoid biosynthesis; isopentenyl diphosphate biosynthesis via DXP pathway; isopentenyl diphosphate from 1-deoxy-D-xylulose 5-phosphate: step 1/6. Catalyzes the NADPH-dependent rearrangement and reduction of 1-deoxy-D-xylulose-5-phosphate (DXP) to 2-C-methyl-D-erythritol 4-phosphate (MEP). This chain is 1-deoxy-D-xylulose 5-phosphate reductoisomerase, found in Idiomarina loihiensis (strain ATCC BAA-735 / DSM 15497 / L2-TR).